The chain runs to 58 residues: Large ribosomal subunit protein bL32 (58 aa).

Belongs to the bacterial ribosomal protein bL32 family.

The sequence is that of Large ribosomal subunit protein bL32 from Prochlorococcus marinus (strain MIT 9303).